Consider the following 179-residue polypeptide: Ribosome maturation factor RimM (179 aa).

The region spanning 102–179 is the PRC barrel domain; sequence DGEYYWYQLE…EMKVEWDADF (78 aa).

Belongs to the RimM family. As to quaternary structure, binds ribosomal protein uS19.

Its subcellular location is the cytoplasm. Its function is as follows. An accessory protein needed during the final step in the assembly of 30S ribosomal subunit, possibly for assembly of the head region. Essential for efficient processing of 16S rRNA. May be needed both before and after RbfA during the maturation of 16S rRNA. It has affinity for free ribosomal 30S subunits but not for 70S ribosomes. This is Ribosome maturation factor RimM from Pseudomonas syringae pv. tomato (strain ATCC BAA-871 / DC3000).